The primary structure comprises 1533 residues: Glycogen debranching enzyme (1533 aa).

The residue at position 64 (Ser-64) is a Phosphoserine. Residues Asp-527, His-530, and Asp-628 contribute to the active site.

The protein belongs to the glycogen debranching enzyme family. As to quaternary structure, monomer. Interacts with NHLRC1/malin. In terms of processing, ubiquitinated.

The protein resides in the cytoplasm. It carries out the reaction Transfers a segment of a (1-&gt;4)-alpha-D-glucan to a new position in an acceptor, which may be glucose or a (1-&gt;4)-alpha-D-glucan.. The enzyme catalyses Hydrolysis of (1-&gt;6)-alpha-D-glucosidic branch linkages in glycogen phosphorylase limit dextrin.. Multifunctional enzyme acting as 1,4-alpha-D-glucan:1,4-alpha-D-glucan 4-alpha-D-glycosyltransferase and amylo-1,6-glucosidase in glycogen degradation. In Canis lupus familiaris (Dog), this protein is Glycogen debranching enzyme (AGL).